We begin with the raw amino-acid sequence, 967 residues long: Phosphoenolpyruvate carboxylase 2 (967 aa).

Residue serine 13 is modified to Phosphoserine. Catalysis depends on residues histidine 174 and lysine 602.

It belongs to the PEPCase type 1 family. As to quaternary structure, homotetramer. Mg(2+) serves as cofactor.

The protein resides in the cytoplasm. It carries out the reaction oxaloacetate + phosphate = phosphoenolpyruvate + hydrogencarbonate. It participates in photosynthesis; C3 acid pathway. With respect to regulation, by light-reversible phosphorylation. In terms of biological role, through the carboxylation of phosphoenolpyruvate (PEP) it forms oxaloacetate, a four-carbon dicarboxylic acid source for the tricarboxylic acid cycle. This chain is Phosphoenolpyruvate carboxylase 2 (PEP4), found in Zea mays (Maize).